A 3664-amino-acid polypeptide reads, in one-letter code: Msx2-interacting protein (3664 aa).

The DNA-binding element occupies 1-573 (MVRETRHLWV…YAQAAVKETK (573 aa)). One can recognise an RRM 1 domain in the interval 6–81 (RHLWVGNLPE…RDLRTDYNEP (76 aa)). The disordered stretch occupies residues 70–89 (GDRDLRTDYNEPGTIPSAAR). The residue at position 99 (S99) is a Phosphoserine. 3 disordered regions span residues 103 to 164 (EVSG…RTRH), 183 to 209 (YYAS…REQF), and 225 to 330 (TREV…EKDE). At R108 the chain carries Omega-N-methylarginine. Positions 123 to 164 (HAREGRYERRLDGASDNRERAYEHSAYGHHERGTGGFDRTRH) are enriched in basic and acidic residues. 2 positions are modified to phosphoserine: S188 and S190. 2 stretches are compositionally biased toward basic and acidic residues: residues 192 to 207 (NRFD…RARE) and 225 to 237 (TREV…ERNY). A compositionally biased stretch (low complexity) spans 245-309 (PHSSQSRNQS…SSSDDSPARS (65 aa)). S309 is subject to Phosphoserine. RRM domains are found at residues 335–415 (FGIK…IGPE), 438–513 (RTLF…FGKS), and 517–589 (NCVW…FANR). Phosphoserine is present on S623. Basic and acidic residues predominate over residues 678–723 (REYRDYRNDPYEQDIREYSYRQRERERERERFESDRDRDHERRPIE). Disordered stretches follow at residues 678–871 (REYR…AKNR), 918–941 (QVSQ…KVPK), and 957–1020 (RLKA…KKQP). Residues 688-715 (YEQDIREYSYRQRERERERERFESDRDR) are a coiled coil. 4 positions are modified to phosphoserine: S725, S727, S736, and S740. The segment covering 747-761 (LPSDSERRLYSRSSD) has biased composition (basic and acidic residues). Over residues 762-772 (RSGSCSSLSPP) the composition is skewed to low complexity. Phosphoserine is present on S770. Basic and acidic residues predominate over residues 773–820 (RYEKLDKSRLERYTKNEKTDKERTFDPERVERERRLIRKEKVEKDKTD). 3 positions are modified to phosphoserine: S830, S833, and S847. Basic and acidic residues-rich tracts occupy residues 841–871 (ENER…AKNR), 925–941 (AKSD…KVPK), and 993–1020 (LKAE…KKQP). Residues 977–1004 (DLEKLEARKRRFADSNLKAEKQKPEVKK) are a coiled coil. S1062 is subject to Phosphoserine. The tract at residues 1070–1287 (ASISVGSGSR…SPRLLSVKGS (218 aa)) is disordered. Residues 1071-1082 (SISVGSGSRPSS) show a composition bias toward low complexity. The span at 1123 to 1212 (GPEREDVRKN…ERRSLVHEVG (90 aa)) shows a compositional bias: basic and acidic residues. Phosphothreonine is present on T1140. S1168 is subject to Phosphoserine. A coiled-coil region spans residues 1170-1191 (RKQMEQSRRKQQMEMEIAKSEK). Phosphoserine occurs at positions 1194, 1222, 1252, 1261, 1268, 1278, 1283, 1287, 1333, 1380, and 1382. The span at 1231–1257 (DHVDFDICTKRERNYRSSRQISEDSER) shows a compositional bias: basic and acidic residues. The disordered stretch occupies residues 1366–1397 (RKRSVRDLEPGEVPSDSDEDGEHKSHSPRASA). The stretch at 1408–1428 (LRDREDKLRERDERLSSSLER) forms a coiled coil. Phosphothreonine is present on residues T1439 and T1441. Coiled-coil stretches lie at residues 1496–1529 (KKKK…FASR) and 1592–1612 (RMQQ…KQED). Disordered stretches follow at residues 1497–1524 (KKKI…ERQE), 1588–2171 (MELT…QMEL), 2185–2532 (SASA…TSSS), 2566–2590 (PCLH…APPV), 2775–2806 (QRAS…GAGL), and 2847–2875 (FQQS…QAPA). Basic and acidic residues-rich tracts occupy residues 1501 to 1524 (RTDS…ERQE) and 1588 to 1631 (MELT…DSEL). Phosphothreonine occurs at positions 1619 and 1633. Positions 1633 to 1646 (TPPSVGPPSVTVVT) are enriched in low complexity. Residues 1657-1674 (TTGDKTVEAPLVTEEKTV) are compositionally biased toward basic and acidic residues. The segment covering 1686–1695 (ASEPAPAPVE) has biased composition (low complexity). Positions 1764–1779 (QKSEEANEPKAEKPDA) are enriched in basic and acidic residues. Residues 1791–1802 (AEAAPESQPPAS) are compositionally biased toward low complexity. Residue T1826 is modified to Phosphothreonine. 2 stretches are compositionally biased toward basic and acidic residues: residues 1839–1853 (PVTR…EKLK) and 1861–1876 (EAQK…EKIT). 2 positions are modified to phosphoserine: S1897 and S1918. A compositionally biased stretch (basic and acidic residues) spans 1912-1925 (GDHENRSPVKEPVE). Residues 1928–1944 (RVTRKRLERELQEAAAV) adopt a coiled-coil conformation. At T1947 the chain carries Phosphothreonine. A compositionally biased stretch (basic residues) spans 1949–1958 (RRGRPPKTRR). Basic and acidic residues-rich tracts occupy residues 2000–2010 (GKNEPKVDATR), 2026–2054 (SSME…DKNP), and 2062–2073 (VVEKKPAPEKNS). Residues S2101, S2120, and S2126 each carry the phosphoserine modification. Composition is skewed to basic and acidic residues over residues 2122-2132 (EKSESPQKEDG) and 2140-2153 (DPVD…KEDV). Residues 2130–2464 (EDGLSSQLKS…ESDPVTPPSD (335 aa)) are interaction with MSX2. S2159 is modified (phosphoserine). Phosphothreonine is present on T2163. Residues 2201–2707 (EDRDKPAHQA…NVLTGPVNVL (507 aa)) enclose the RID domain. Residues 2316-2328 (KGSKEVEVTLVRK) show a composition bias toward basic and acidic residues. Residues 2329–2345 (DKGRQKTTRSRRKRNTN) show a composition bias toward basic residues. At S2366 the chain carries Phosphoserine. Residues 2380–2391 (APQEEKQSEKPH) show a composition bias toward basic and acidic residues. T2393 carries the phosphothreonine modification. Positions 2394–2415 (PPQSCTSDLSKIPSTENSSQEI) are enriched in polar residues. Position 2421 is a phosphothreonine (T2421). Pro residues predominate over residues 2429 to 2438 (PDLPPPPQPA). A phosphoserine mark is found at S2452 and S2456. Positions 2459 to 2471 (VTPPSDPSIPIPT) are enriched in pro residues. Residue T2460 is modified to Phosphothreonine. A phosphoserine mark is found at S2481, S2486, and S2493. Residues 2577 to 2586 (DSKKPLEEKT) are compositionally biased toward basic and acidic residues. Residues 2709 to 2870 (TPVNATVGTV…VTASQPPSKG (162 aa)) are interaction with RBPSUH. A compositionally biased stretch (polar residues) spans 2847 to 2867 (FQQSVSKSQVKPDSVTASQPP). T2938 and T2950 each carry phosphothreonine. Disordered stretches follow at residues 2978–3010 (LGST…IPAD) and 3022–3047 (DAHS…STAS). The span at 3032 to 3047 (GPSSFPRASHPSSTAS) shows a compositional bias: low complexity. Asymmetric dimethylarginine is present on residues R3113 and R3121. Disordered regions lie at residues 3135–3156 (QRAS…QHPP), 3208–3265 (EQPR…APHG), and 3327–3492 (AASS…HLTS). Pro residues-rich tracts occupy residues 3244-3262 (TPTP…PAPA) and 3343-3356 (GPPP…PPQP). Polar residues-rich tracts occupy residues 3384 to 3399 (KMPQ…QTGV) and 3417 to 3436 (TQVQ…SPVS). Phosphoserine is present on S3433. Residues 3498–3664 (MVQLLKKYPI…PHLMIVIASV (167 aa)) enclose the SPOC domain.

The protein belongs to the RRM Spen family. As to quaternary structure, interacts with MSX2 and HIPK3. Interacts with NCOR2, HDAC1, HDAC2, RBBP4, MBD3 and MTA1L1. Interacts with RBPSUH; this interaction may prevent the interaction between RBPSUH and NOTCH1. Interacts with the nuclear receptors RAR and PPARD. Interacts with RAR in absence of ligand. Binds to the steroid receptor RNA coactivator SRA. (Microbial infection) Interacts with Epstein-Barr virus BSFL2/BMLF1. Expressed at high level in brain, testis, spleen and thymus. Expressed at intermediate level in kidney, liver, mammary gland and skin.

The protein localises to the nucleus. Functionally, may serve as a nuclear matrix platform that organizes and integrates transcriptional responses. In osteoblasts, supports transcription activation: synergizes with RUNX2 to enhance FGFR2-mediated activation of the osteocalcin FGF-responsive element (OCFRE). Has also been shown to be an essential corepressor protein, which probably regulates different key pathways such as the Notch pathway. Negative regulator of the Notch pathway via its interaction with RBPSUH, which prevents the association between NOTCH1 and RBPSUH, and therefore suppresses the transactivation activity of Notch signaling. Blocks the differentiation of precursor B-cells into marginal zone B-cells. Probably represses transcription via the recruitment of large complexes containing histone deacetylase proteins. May bind both to DNA and RNA. This chain is Msx2-interacting protein (SPEN), found in Homo sapiens (Human).